We begin with the raw amino-acid sequence, 370 residues long: Alpha-ketoglutarate-dependent dioxygenase cnsP (370 aa).

Low complexity predominate over residues 1–12; that stretch reads MSTTTVITPGTI. A disordered region spans residues 1–20; that stretch reads MSTTTVITPGTITREKNENG. Histidine 131 serves as a coordination point for substrate. The Fe cation site is built by histidine 169 and aspartate 171. Residue threonine 197 participates in 2-oxoglutarate binding. A Fe cation-binding site is contributed by histidine 321. Residues arginine 333 and arginine 337 each coordinate 2-oxoglutarate. Arginine 337 is a binding site for substrate.

The protein belongs to the TfdA dioxygenase family. Fe(2+) is required as a cofactor.

It participates in alkaloid biosynthesis. Its function is as follows. Alpha-ketoglutarate-dependent dioxygenase; part of the gene cluster that mediates the biosynthesis of communesins, a prominent class of indole alkaloids with great potential as pharmaceuticals. Communesins are biosynthesized by the coupling of tryptamine and aurantioclavine, two building blocks derived from L-tryptophan. The L-tryptophan decarboxylase cnsB converts L-tryptophan to tryptamine, whereas the tryptophan dimethylallyltransferase cnsF converts L-tryptophan to 4-dimethylallyl tryptophan which is further transformed to aurantioclavine by the aurantioclavine synthase cnsA, probably aided by the catalase cnsD. The cytochrome P450 monooxygenase cnsC catalyzes the heterodimeric coupling between the two different indole moieties, tryptamine and aurantioclavine, to construct vicinal quaternary stereocenters and yield the heptacyclic communesin scaffold. The O-methyltransferase cnsE then methylates the communesin scaffold to produce communesin K, the simplest characterized communesin that contains the heptacyclic core. The dioxygenase cnsJ converts communesin K into communesin I. Acylation to introduce the hexadienyl group at position N16 of communesin I by the acyltransferase cnsK leads to the production of communesin B. The hexadienyl group is produced by the highly reducing polyketide synthase cnsI, before being hydrolytically removed from cnsI by the serine hydrolase cnsH, converted into hexadienyl-CoA by the CoA ligase cnsG, and then transferred to communesin I by cnsK. Surprisingly, cnsK may also be a promiscuous acyltransferase that can tolerate a range of acyl groups, including acetyl-, propionyl-, and butyryl-CoA, which lead to communesins A, G and H respectively. The roles of the alpha-ketoglutarate-dependent dioxygenases cnsM and cnsP have still to be determined. In Penicillium expansum (Blue mold rot fungus), this protein is Alpha-ketoglutarate-dependent dioxygenase cnsP.